Reading from the N-terminus, the 406-residue chain is Elongation factor Tu, chloroplastic (406 aa).

The 203-residue stretch at Lys-8–Lys-210 folds into the tr-type G domain. Residues Gly-17–Thr-24, Asp-77–His-81, and Asn-132–Asp-135 each bind GTP. Thr-24 is a Mg(2+) binding site.

Belongs to the TRAFAC class translation factor GTPase superfamily. Classic translation factor GTPase family. EF-Tu/EF-1A subfamily. As to quaternary structure, monomer.

It is found in the plastid. The protein localises to the chloroplast. The catalysed reaction is GTP + H2O = GDP + phosphate + H(+). GTP hydrolase that promotes the GTP-dependent binding of aminoacyl-tRNA to the A-site of ribosomes during protein biosynthesis. The chain is Elongation factor Tu, chloroplastic (tufA) from Chaetosphaeridium globosum (Charophycean green alga).